The primary structure comprises 130 residues: Protachykinin-1 (130 aa).

A signal peptide spans Met1–Ala19. The propeptide occupies Glu20–Ala56. Residues Met68 and Met107 each carry the methionine amide modification.

The protein belongs to the tachykinin family. Post-translationally, the substance P form is cleaved at Pro-59 by the prolyl endopeptidase FAP (seprase) activity (in vitro). Substance P is also cleaved and degraded by Angiotensin-converting enzyme (ACE) and neprilysin (MME).

It localises to the secreted. In terms of biological role, tachykinins are active peptides which excite neurons, evoke behavioral responses, are potent vasodilators and secretagogues, and contract (directly or indirectly) many smooth muscles. The sequence is that of Protachykinin-1 (Tac1) from Mus musculus (Mouse).